The primary structure comprises 537 residues: Putative cysteine ligase BshC (537 aa).

Residues Ile422 to Ile450 are a coiled coil.

Belongs to the BshC family.

Involved in bacillithiol (BSH) biosynthesis. May catalyze the last step of the pathway, the addition of cysteine to glucosamine malate (GlcN-Mal) to generate BSH. This is Putative cysteine ligase BshC from Staphylococcus aureus (strain Mu3 / ATCC 700698).